Consider the following 505-residue polypeptide: Pup deamidase/depupylase (505 aa).

Residue 6-10 (GTEVE) participates in ATP binding. The Mg(2+) site is built by Glu8 and Tyr93. The active-site Proton acceptor is the Asp95. Glu100 contributes to the Mg(2+) binding site. ATP is bound at residue 102–103 (SA). Residue His156 coordinates Mg(2+). Residues Asn158 and Arg240 each contribute to the ATP site. Residue His242 participates in Mg(2+) binding.

It belongs to the Pup ligase/Pup deamidase family. Pup deamidase subfamily. As to quaternary structure, interacts with the prokaryotic ubiquitin-like protein Pup. The cofactor is ATP.

It catalyses the reaction [prokaryotic ubiquitin-like protein]-C-terminal-L-glutamine + H2O = [prokaryotic ubiquitin-like protein]-C-terminal-L-glutamate + NH4(+). Its pathway is protein degradation; proteasomal Pup-dependent pathway. Specifically catalyzes the deamidation of the C-terminal glutamine of the prokaryotic ubiquitin-like protein Pup to glutamate, thereby rendering Pup competent for conjugation. Also displays depupylase (DPUP) activity, removing conjugated Pup from target proteins; is thus involved in the recycling of Pup and may function similarly to deubiquitinases (DUBs) in eukaryotes to prevent or promote proteasomal degradation of certain proteins. This chain is Pup deamidase/depupylase (dop), found in Mycobacterium tuberculosis (strain CDC 1551 / Oshkosh).